A 291-amino-acid chain; its full sequence is Sulfotransferase 1A1 (291 aa).

44 to 49 lines the 3'-phosphoadenylyl sulfate pocket; that stretch reads KSGTTW. A substrate-binding site is contributed by 102–104; the sequence is KTH. Catalysis depends on His-104, which acts as the Proton acceptor. Residues Arg-126, Ser-134, Tyr-189, 223–228, and 251–255 contribute to the 3'-phosphoadenylyl sulfate site; these read TSFKKM and FMRKG. Ser-134 bears the Phosphoserine mark.

Belongs to the sulfotransferase 1 family. In terms of assembly, homodimer. The N-terminus is blocked. As to expression, liver, kidney, heart and colon.

Its subcellular location is the cytoplasm. The catalysed reaction is a phenol + 3'-phosphoadenylyl sulfate = an aryl sulfate + adenosine 3',5'-bisphosphate + H(+). It catalyses the reaction 17beta-estradiol + 3'-phosphoadenylyl sulfate = 17beta-estradiol 3-sulfate + adenosine 3',5'-bisphosphate + H(+). The enzyme catalyses 4-ethylphenol + 3'-phosphoadenylyl sulfate = 4-ethylphenyl sulfate + adenosine 3',5'-bisphosphate + H(+). It carries out the reaction 4-nitrophenol + 3'-phosphoadenylyl sulfate = 4-nitrophenyl sulfate + adenosine 3',5'-bisphosphate. The catalysed reaction is dopamine + 3'-phosphoadenylyl sulfate = dopamine 3-O-sulfate + adenosine 3',5'-bisphosphate + H(+). It catalyses the reaction dopamine + 3'-phosphoadenylyl sulfate = dopamine 4-O-sulfate + adenosine 3',5'-bisphosphate + H(+). The enzyme catalyses 3,3',5-triiodo-L-thyronine + 3'-phosphoadenylyl sulfate = 3,3',5-triiodo-L-thyronine sulfate + adenosine 3',5'-bisphosphate + H(+). It carries out the reaction 3,3',5'-triiodo-L-thyronine + 3'-phosphoadenylyl sulfate = 3,3',5'-triiodo-L-thyronine sulfate + adenosine 3',5'-bisphosphate + H(+). The catalysed reaction is 3,3'-diiodo-L-thyronine + 3'-phosphoadenylyl sulfate = 3,3'-diiodo-L-thyronine sulfate + adenosine 3',5'-bisphosphate + H(+). It catalyses the reaction L-thyroxine + 3'-phosphoadenylyl sulfate = L-thyroxine sulfate + adenosine 3',5'-bisphosphate + H(+). Sulfotransferase that utilizes 3'-phospho-5'-adenylyl sulfate (PAPS) as sulfonate donor to catalyze the sulfate conjugation of a wide variety of acceptor molecules bearing a hydroxyl or an amine group. Sulfonation increases the water solubility of most compounds, and therefore their renal excretion, but it can also result in bioactivation to form active metabolites. Displays broad substrate specificity for small phenolic compounds. Plays an important roles in the sulfonation of endogenous molecules such as steroid hormones. Mediates the sulfate conjugation of a variety of xenobiotics, including the drugs acetaminophen and minoxidil. Mediates also the metabolic activation of carcinogenic N-hydroxyarylamines leading to highly reactive intermediates capable of forming DNA adducts, potentially resulting in mutagenesis. May play a role in gut microbiota-host metabolic interaction. O-sulfonates 4-ethylphenol (4-EP), a dietary tyrosine-derived metabolite produced by gut bacteria. The product 4-EPS crosses the blood-brain barrier and may negatively regulate oligodendrocyte maturation and myelination, affecting the functional connectivity of different brain regions associated with the limbic system. Catalyzes the sulfate conjugation of dopamine. Catalyzes the sulfation of T4 (L-thyroxine/3,5,3',5'-tetraiodothyronine), T3 (3,5,3'-triiodothyronine), rT3 (3,3',5'-triiodothyronine) and 3,3'-T2 (3,3'-diiodothyronine), with a substrate preference of 3,3'-T2 &gt; rT3 &gt; T3 &gt; T4. The sequence is that of Sulfotransferase 1A1 (Sult1a1) from Rattus norvegicus (Rat).